A 475-amino-acid chain; its full sequence is MADMQNLVERLERAVGRLEAVSHTSDMHRGYGDSPSKAGAAPYVQVFDSLLAGPVAEYLKISKEIGGDVQKHAEMVHTGLKLERALLVTASQCQQPADNKLSDLLAPISEQIKEVITFREKNRGSKLFNHLSAVSESIQALGWVAMAPKPGPYVKEMNDAAMFYTNRVLKEYKDVDKKHVDWVKAYLSIWTELQAYIKEFHTTGLAWSKTGPVAKELSGLPSGPSAGSGPPPPPPGPPPPPVSTSSGSDESASRSALFAQINQGESITHALKHVSDDMKTHKNPALKAQSGPLRSGPKPFSAPKPQTSQSPKPATKKEPAVLELEGKKWRVENQENVSNLVIEDTELKQVAYIYKCVSTTLQIKGKINSITVDNCKKLGLVFDDVVGIVEIINSGDVKVQVMGKVPTISINKTDGCHAYLSKNSLDCEIVSAKSSEMNVLIPTEGGDFNEFPVPEQFKTLWNGQKLVTTVTEIAG.

Alanine 2 carries the post-translational modification N-acetylalanine. Position 31 is a phosphotyrosine (tyrosine 31). Position 34 is a phosphoserine (serine 34). Lysine 81 carries the N6-acetyllysine modification. 2 disordered regions span residues 216–255 and 278–318; these read ELSG…ASRS and MKTH…TKKE. Residues 218 to 228 are compositionally biased toward low complexity; that stretch reads SGLPSGPSAGS. Pro residues predominate over residues 229–242; that stretch reads GPPPPPPGPPPPPV. Low complexity predominate over residues 243 to 255; that stretch reads STSSGSDESASRS. Lysine 287 bears the N6-methyllysine mark. Serine 290, serine 295, and serine 301 each carry phosphoserine. Position 307 is a phosphothreonine (threonine 307). Serine 308 and serine 310 each carry phosphoserine. The C-CAP/cofactor C-like domain maps to 313–453; the sequence is PATKKEPAVL…EGGDFNEFPV (141 aa). A Glycyl lysine isopeptide (Lys-Gly) (interchain with G-Cter in SUMO1) cross-link involves residue lysine 348.

This sequence belongs to the CAP family. Homodimer. Binds actin monomers.

Its subcellular location is the cell membrane. Functionally, directly regulates filament dynamics and has been implicated in a number of complex developmental and morphological processes, including mRNA localization and the establishment of cell polarity. The protein is Adenylyl cyclase-associated protein 1 (CAP1) of Pongo abelii (Sumatran orangutan).